A 211-amino-acid chain; its full sequence is Glial cell line-derived neurotrophic factor (211 aa).

The signal sequence occupies residues 1 to 19; the sequence is MKLWDVVAVCLVLLHTASA. Positions 20–75 are excised as a propeptide; that stretch reads FPLPAGKRLLEAPAEDHSLGHRRVPFALTSDSNMPEDYPDQFDDVMDFIQATIKRL. Residues 76–113 form a disordered region; the sequence is KRSPDKQAAALPRRERNRQAAAASPENSRGKGRRGQRG. Intrachain disulfides connect Cys-118-Cys-179, Cys-145-Cys-208, and Cys-149-Cys-210. Residues Asn-126 and Asn-162 are each glycosylated (N-linked (GlcNAc...) asparagine).

This sequence belongs to the TGF-beta family. GDNF subfamily. As to quaternary structure, homodimer; disulfide-linked. Interacts with GFRA1 coreceptor and RET: forms a 2:2:2 ternary complex composed of GDNF ligand, GFRA1 and RET receptor. Interacts (via propeptide) with SORL1 (via N-terminal ectodomain); this interaction affects GDNF-regulated, but not constitutive secretion. Also interacts with SORL1 in complex with GFRA1; this interaction leads to GDNF endocytosis and lysosomal degradation. As to expression, expressed in both the central nervous system (CNS) and in non-CNS tissues. Expressed in a highly dynamic pattern in the anterior neuroectoderm during the early stages of neurogenesis between 7.5 dpc and 10.5 dpc. Beginning at 10.5 dpc, expression begins in mesenchymal tissues of several organs including the digestive tract, kidney, testis, frontonasal mass, tooth primordium, tongue, mandible, whisker follicles, ear, eye, limb bud and in distinct regions of the brain. Also expressed in the heart, ileum, liver and muscle.

The protein localises to the secreted. In terms of biological role, neurotrophic factor that enhances survival and morphological differentiation of dopaminergic neurons and increases their high-affinity dopamine uptake. Acts by binding to its coreceptor, GFRA1, leading to autophosphorylation and activation of the RET receptor. Involved in the development of the neural crest. This chain is Glial cell line-derived neurotrophic factor (Gdnf), found in Mus musculus (Mouse).